A 338-amino-acid polypeptide reads, in one-letter code: Lipoate-protein ligase A (338 aa).

The region spanning 29-216 (SPDQRVLFLW…AFFAYYDEQV (188 aa)) is the BPL/LPL catalytic domain. ATP is bound by residues arginine 71, 76–79 (GAVF), and lysine 134. Lysine 134 is a binding site for (R)-lipoate.

This sequence belongs to the LplA family. As to quaternary structure, monomer.

It localises to the cytoplasm. The catalysed reaction is L-lysyl-[lipoyl-carrier protein] + (R)-lipoate + ATP = N(6)-[(R)-lipoyl]-L-lysyl-[lipoyl-carrier protein] + AMP + diphosphate + H(+). It participates in protein modification; protein lipoylation via exogenous pathway; protein N(6)-(lipoyl)lysine from lipoate: step 1/2. It functions in the pathway protein modification; protein lipoylation via exogenous pathway; protein N(6)-(lipoyl)lysine from lipoate: step 2/2. Functionally, catalyzes both the ATP-dependent activation of exogenously supplied lipoate to lipoyl-AMP and the transfer of the activated lipoyl onto the lipoyl domains of lipoate-dependent enzymes. This is Lipoate-protein ligase A from Yersinia pseudotuberculosis serotype IB (strain PB1/+).